A 174-amino-acid polypeptide reads, in one-letter code: Large ribosomal subunit protein uL10 (174 aa).

This sequence belongs to the universal ribosomal protein uL10 family. As to quaternary structure, part of the ribosomal stalk of the 50S ribosomal subunit. The N-terminus interacts with L11 and the large rRNA to form the base of the stalk. The C-terminus forms an elongated spine to which L12 dimers bind in a sequential fashion forming a multimeric L10(L12)X complex.

Functionally, forms part of the ribosomal stalk, playing a central role in the interaction of the ribosome with GTP-bound translation factors. The sequence is that of Large ribosomal subunit protein uL10 from Desulfovibrio desulfuricans (strain ATCC 27774 / DSM 6949 / MB).